The chain runs to 161 residues: uncharacterized protein (161 aa).

A disordered region spans residues 126-161 (TPSNCGESSTSSGQSSGDESNCSLRTHGVYTRGEQH). Low complexity predominate over residues 128–148 (SNCGESSTSSGQSSGDESNCS).

This sequence belongs to the herpesviridae US1 family.

This is an uncharacterized protein from Human cytomegalovirus (strain AD169) (HHV-5).